The sequence spans 165 residues: LIM domain transcription factor LMO4 (165 aa).

2 LIM zinc-binding domains span residues 23–83 and 87–147; these read CAGC…LFGN and CSAC…ALIN.

Interacts strongly with LDBS. Interacts with LDB2 and LDB1. Interaction with complexes consisting of at least LDB1 and LHX3 acts to disassemble the complex; may preferentially disassemble LDB1-LHX3 complexes rather than complexes consisting of LDB1, LHX3 and ISL1. Interacts (via the LIM zinc-binding domain 1) with RBBP8. Interacts with both RPPB8 and LDB1 through the same face and cannot bind to both proteins simultaneously. Interacts with BRCA1 (via the BRCT domains); the interaction represses BRCA1 transcriptional activity. Interacts with DEAF1; LMO4 blocks export from nucleus.

Functionally, transcription cofactor. Plays a role in establishing motor neuron identity, in concert with MNX1, acting, at least in part, to disrupt LDB1-LHX3 complexes thereby negatively modulating interneuron genes in motor neurons. The protein is LIM domain transcription factor LMO4 (LMO4) of Bos taurus (Bovine).